The chain runs to 370 residues: MATHKLLLLPGDGIGTEVMAEVSRLIDWLNKAGIASFETEHGLVGGAAYDADKVAITDATMALAQASDAVIFGAVGGPKWDGVPYDARPEAGLLRLRKDLGLFANLRPAVCYPALADSSSLKRDVVEGLDIMIVRELTGGVYFGEPKTITDLGNGQKRAVDTQVYDTYEIERIGRVAFDLARKRRNKVTSMEKRNVMKTGVLWNEVITAVHDREYKDVQLDHQLADSGGMNLVKWPKQFDVIVTDNLFGDMLSDIAAMLTGSLGMLPSASLGEVDAKTGKRKSMYEPVHGSAPDIAGKGMANPVAMLASFGMALRYSLDMGALADKLDEAIAAVLAKGLRTADIKSEGTTVISTSQMGEAIVTELQALHA.

NAD(+) is bound at residue 77 to 90 (GPKWDGVPYDARPE). Substrate-binding residues include R97, R107, R135, and D226. Residues D226, D250, and D254 each coordinate Mg(2+). 290–302 (GSAPDIAGKGMAN) provides a ligand contact to NAD(+).

The protein belongs to the isocitrate and isopropylmalate dehydrogenases family. LeuB type 1 subfamily. Homodimer. Mg(2+) is required as a cofactor. It depends on Mn(2+) as a cofactor.

Its subcellular location is the cytoplasm. The enzyme catalyses (2R,3S)-3-isopropylmalate + NAD(+) = 4-methyl-2-oxopentanoate + CO2 + NADH. It functions in the pathway amino-acid biosynthesis; L-leucine biosynthesis; L-leucine from 3-methyl-2-oxobutanoate: step 3/4. In terms of biological role, catalyzes the oxidation of 3-carboxy-2-hydroxy-4-methylpentanoate (3-isopropylmalate) to 3-carboxy-4-methyl-2-oxopentanoate. The product decarboxylates to 4-methyl-2 oxopentanoate. This Rhodopseudomonas palustris (strain ATCC BAA-98 / CGA009) protein is 3-isopropylmalate dehydrogenase.